A 364-amino-acid chain; its full sequence is Nucleosome assembly protein 1;2 (364 aa).

Residues 32–86 (VESIKNTLQGLAARHTDVLESLEPKVRKRVEVLREIQSQHDDLEAKFFEERAALE) adopt a coiled-coil conformation. The Nuclear export signal motif lies at 53–68 (LEPKVRKRVEVLREIQ). Positions 227 to 232 (KKKPKK) match the Nuclear localization signal motif. 2 disordered regions span residues 250–269 (FNFFSPPQVPDDDEEIDEDT) and 301–364 (GEAA…CKQQ). Acidic residues-rich tracts occupy residues 259-269 (PDDDEEIDEDT) and 304-340 (AQDEDFEGIMDDEDDDDEDDDDDEDEDDEGDDEDDED). Cys-361 bears the Cysteine methyl ester mark. A lipid anchor (S-farnesyl cysteine) is attached at Cys-361. Positions 362-364 (KQQ) are cleaved as a propeptide — removed in mature form.

It belongs to the nucleosome assembly protein (NAP) family.

The protein localises to the nucleus. Its subcellular location is the cytoplasm. Functionally, may modulate chromatin structure by regulation of nucleosome assembly/disassembly. This Oryza sativa subsp. japonica (Rice) protein is Nucleosome assembly protein 1;2 (NAP1;2).